The sequence spans 426 residues: Protein arginine N-methyltransferase 2 (426 aa).

Disordered regions lie at residues Asp-65 to Ser-88 and Asp-155 to Ala-175. A compositionally biased stretch (polar residues) spans Asn-73–Ser-88. Acidic residues predominate over residues Asp-155–Gln-168. Residues Pro-207–Asp-426 form the RMT2 domain. S-adenosyl-L-methionine is bound by residues Tyr-214, Met-243, His-263–Val-268, Glu-284–His-286, Trp-311–Gln-312, and Asp-331.

The protein belongs to the class I-like SAM-binding methyltransferase superfamily. RMT2 methyltransferase family. Monomer.

Its subcellular location is the cytoplasm. It is found in the nucleus. In terms of biological role, S-adenosyl-L-methionine-dependent protein-arginine N-methyltransferase that methylates the delta-nitrogen atom of arginine residues to form N5-methylarginine (type IV) in target proteins. Monomethylates ribosomal protein L12. This is Protein arginine N-methyltransferase 2 from Emericella nidulans (strain FGSC A4 / ATCC 38163 / CBS 112.46 / NRRL 194 / M139) (Aspergillus nidulans).